A 2228-amino-acid polypeptide reads, in one-letter code: Genome polyprotein (2228 aa).

Residues 55-76 form a disordered region; that stretch reads TAEVGSHQPEPLKTSVDKPGSK. 2 consecutive short sequence motifs ((L)YPX(n)L motif) follow at residues 167–171 and 200–205; these read YPHGL and YPVWEL. Positions 766-836 are involved in P1-2A pentamerization; it reads MMDRIALGDL…PRKIKGVFSQ (71 aa). Residues 1011 to 1031 form a helical membrane-spanning segment; the sequence is TVEIINTVLCFVKSGILLYVI. Residues 1043 to 1070 are membrane-penetrating ability; the sequence is IGLLRVMNYADIGCSVISCGKVFSKMLE. Residues 1127–1153 adopt a coiled-coil conformation; sequence NKKDVLNILKDHQQKIERAIEEADNFC. The SF3 helicase domain occupies 1204-1366; the sequence is HQKLKNLGSI…SFFKNPHNDM (163 aa). Residue 1230 to 1237 coordinates ATP; sequence GKRGGGKS. The helical transmembrane segment at 1462-1482 threads the bilayer; the sequence is WVAVGAAVGVLGVLVGGWYVY. The residue at position 1499 (tyrosine 1499) is an O-(5'-phospho-RNA)-tyrosine. The Peptidase C3 domain occupies 1514-1728; the sequence is DPVESQSTLE…VAKLVTQEMF (215 aa). Residues histidine 1563, aspartate 1603, and cysteine 1691 each act as for protease 3C activity in the active site. The region spanning 1977-2098 is the RdRp catalytic domain; sequence DVGLDLDFSA…VFSRQVQIDN (122 aa).

The protein belongs to the picornaviridae polyprotein family. As to quaternary structure, homodimer. Homomultimer; probably interacts with membranes in a multimeric form. Seems to assemble into amyloid-like fibers. In terms of assembly, homodimer. Monomer. Interacts with protein 3CD. Interacts with host ACBD3. As to quaternary structure, interacts with protein 3AB. In terms of assembly, interacts with human MAVS. Homodimer; disulfide-linked. As to quaternary structure, homopentamer. Homooligomer. In terms of assembly, interacts with capsid protein VP2. Interacts with capsid protein VP3. Interacts with capsid protein VP1. Interacts with capsid protein VP3. As to quaternary structure, interacts with capsid protein VP1. Interacts with capsid protein VP2. Post-translationally, specific enzymatic cleavages by viral protease in vivo yield a variety of precursors and mature proteins. Polyprotein processing intermediates are produced, such as P1-2A which is a functional precursor of the structural proteins, VP0 which is a VP4-VP2 precursor, VP1-2A precursor, 3ABC precursor which is a stable and catalytically active precursor of 3A, 3B and 3C proteins, 3AB and 3CD precursors. The assembly signal 2A is removed from VP1-2A by a host protease, possibly host Cathepsin L. This cleavage occurs over a region of 3 amino-acids probably generating VP1 proteins with heterogeneous C-termini. In terms of processing, during virion maturation, immature virions are rendered infectious following cleavage of VP0 into VP4 and VP2. This maturation seems to be an autocatalytic event triggered by the presence of RNA in the capsid and is followed by a conformational change of the particle. The assembly signal 2A is removed from VP1-2A by a host protease, possibly host Cathepsin L in naked virions. This cleavage does not occur in enveloped virions. This cleavage occurs over a region of 3 amino-acids probably generating VP1 proteins with heterogeneous C-termini. Post-translationally, VPg is uridylylated prior to priming replication into VPg-pUpU. In terms of processing, unlike other picornaviruses, does not seem to be myristoylated.

It localises to the virion. Its subcellular location is the host endosome. It is found in the host multivesicular body. The protein resides in the host membrane. The protein localises to the host mitochondrion outer membrane. It localises to the host cytoplasm. Its subcellular location is the host cytoplasmic vesicle membrane. It catalyses the reaction RNA(n) + a ribonucleoside 5'-triphosphate = RNA(n+1) + diphosphate. The catalysed reaction is a ribonucleoside 5'-triphosphate + H2O = a ribonucleoside 5'-diphosphate + phosphate + H(+). It carries out the reaction Selective cleavage of Gln-|-Gly bond in the poliovirus polyprotein. In other picornavirus reactions Glu may be substituted for Gln, and Ser or Thr for Gly.. Its function is as follows. Capsid proteins VP1, VP2, and VP3 form a closed capsid enclosing the viral positive strand RNA genome. All these proteins contain a beta-sheet structure called beta-barrel jelly roll. Together they form an icosahedral capsid (T=3) composed of 60 copies of each VP1, VP2, and VP3, with a diameter of approximately 300 Angstroms. VP1 is situated at the 12 fivefold axes, whereas VP2 and VP3 are located at the quasi-sixfold axes. The naked capsid interacts with the host receptor HAVCR1 to provide virion attachment to and probably entry into the target cell. In terms of biological role, VP0 precursor is a component of the immature procapsids. Functionally, plays a role in the assembly of the 12 pentamers into an icosahedral structure. Has not been detected in mature virions, supposedly owing to its small size. Precursor component of immature procapsids that corresponds to an extended form of the structural protein VP1. After maturation, possibly by the host Cathepsin L, the assembly signal 2A is cleaved to give rise to the mature VP1 protein. Its function is as follows. Functions as a viroporin. Affects membrane integrity and causes an increase in membrane permeability. Involved in host intracellular membrane rearrangements probably to give rise to the viral factories. Does not disrupt calcium homeostasis or glycoprotein trafficking. Antagonizes the innate immune response of the host by suppressing IFN-beta synthesis, which it achieves by interfering with the RIG-I/IFIH1 pathway. In terms of biological role, affects membrane integrity and causes an increase in membrane permeability. Functionally, associates with and induces structural rearrangements of intracellular membranes. Displays RNA-binding activity. The precursor 3ABC is targeted to the mitochondrial membrane where protease 3C activity cleaves and inhibits the host antiviral protein MAVS, thereby disrupting activation of IRF3 through the IFIH1/MDA5 pathway. In vivo, the protease activity of 3ABC precursor is more efficient in cleaving the 2BC precursor than that of protein 3C. The 3ABC precursor may therefore play a role in the proteolytic processing of the polyprotein. Possible viroporin. Its function is as follows. Interacts with the 3CD precursor and with RNA structures found at both the 5'- and 3'-termini of the viral genome. Since the 3AB precursor contains the hydrophobic domain 3A, it probably anchors the whole viral replicase complex to intracellular membranes on which viral RNA synthesis occurs. In terms of biological role, may serve as membrane anchor to the 3AB and 3ABC precursors via its hydrophobic domain. May interact with RNA. Functionally, acts as a primer for viral RNA replication and remains covalently bound to viral genomic RNA. VPg is uridylylated prior to priming replication into VPg-pUpU. The VPg-pUpU is then used as primer on the genomic RNA poly(A) by the RNA-dependent RNA polymerase to replicate the viral genome. Cysteine protease that generates mature viral proteins from the precursor polyprotein. In addition to its proteolytic activity, it binds to viral RNA, and thus influences viral genome replication. RNA and substrate bind cooperatively to the protease. Cleaves IKBKG/NEMO to impair innate immune signaling. Cleaves host PABPC1 which may participate in the switch of viral translation to RNA synthesis. Its function is as follows. Interacts with the 3AB precursor and with RNA structures found at both the 5'- and 3'-termini of the viral genome. Disrupts TLR3 signaling by degrading the host adapter protein TICAM1/TRIF. In terms of biological role, RNA-directed RNA polymerase 3D-POL replicates genomic and antigenomic RNA by recognizing replications specific signals. The polypeptide is Genome polyprotein (Human hepatitis A virus genotype IIIA (isolate NOR-21) (HHAV)).